The primary structure comprises 114 residues: uncharacterized protein (114 aa).

A coiled-coil region spans residues 31–72; it reads EFEKLVSEQMKTMDKLLDLQSELDRCKQIEAELRHLERDARL.

This is an uncharacterized protein from Bacillus subtilis (strain 168).